The primary structure comprises 379 residues: MSDFLPFSRPAMGAEELAAVKTVLDSGWITTGPKNQELEAEFCRLTGNQYAVAVSSATAGMHIALMALGIGEGDEVITPSMTWVSTLNMIVLLGANPVMVDVDRDTLMVTPEHIEAAITPQTKAIIPVHYAGAPADLDAIYALGERYGIPVIEDAAHATGTSYKGRHIGARGTAIFSFHAIKNITCAEGGIVVTDNPQFADKLRSLKFHGLGVDAWDRQSGGRAPQAEVLAPGYKYNLPDLNAAIALAQLQKLDALNARRAAIAAQYHQAMADLPFQPLSLPAWEHIHAWHLFIIRVDETRCGITRDALMASLKTKGIGTGLHFRAAHTQKYYRERFPTLTLPDTEWNSERICSLPLFPDMTESDFDRVITALHQIAGQ.

Residue K182 is modified to N6-(pyridoxal phosphate)lysine.

The protein belongs to the DegT/DnrJ/EryC1 family. ArnB subfamily. Homodimer. Pyridoxal 5'-phosphate is required as a cofactor.

It catalyses the reaction UDP-4-amino-4-deoxy-beta-L-arabinose + 2-oxoglutarate = UDP-beta-L-threo-pentopyranos-4-ulose + L-glutamate. Its pathway is nucleotide-sugar biosynthesis; UDP-4-deoxy-4-formamido-beta-L-arabinose biosynthesis; UDP-4-deoxy-4-formamido-beta-L-arabinose from UDP-alpha-D-glucuronate: step 2/3. It participates in bacterial outer membrane biogenesis; lipopolysaccharide biosynthesis. Functionally, catalyzes the conversion of UDP-4-keto-arabinose (UDP-Ara4O) to UDP-4-amino-4-deoxy-L-arabinose (UDP-L-Ara4N). The modified arabinose is attached to lipid A and is required for resistance to polymyxin and cationic antimicrobial peptides. The polypeptide is UDP-4-amino-4-deoxy-L-arabinose--oxoglutarate aminotransferase (Salmonella schwarzengrund (strain CVM19633)).